Reading from the N-terminus, the 235-residue chain is Ribonuclease PH (235 aa).

Phosphate-binding positions include R86 and 124–126 (GTR).

This sequence belongs to the RNase PH family. As to quaternary structure, homohexameric ring arranged as a trimer of dimers.

The catalysed reaction is tRNA(n+1) + phosphate = tRNA(n) + a ribonucleoside 5'-diphosphate. In terms of biological role, phosphorolytic 3'-5' exoribonuclease that plays an important role in tRNA 3'-end maturation. Removes nucleotide residues following the 3'-CCA terminus of tRNAs; can also add nucleotides to the ends of RNA molecules by using nucleoside diphosphates as substrates, but this may not be physiologically important. Probably plays a role in initiation of 16S rRNA degradation (leading to ribosome degradation) during starvation. This chain is Ribonuclease PH, found in Francisella tularensis subsp. mediasiatica (strain FSC147).